The sequence spans 62 residues: Small ribosomal subunit protein eS27 (62 aa).

The Zn(2+) site is built by Cys-17, Cys-20, Cys-36, and Cys-39. A C4-type zinc finger spans residues 17–39 (CNDCENEQIIFGSASRKITCVVC).

This sequence belongs to the eukaryotic ribosomal protein eS27 family. Part of the 30S ribosomal subunit. It depends on Zn(2+) as a cofactor.

In Methanosarcina mazei (strain ATCC BAA-159 / DSM 3647 / Goe1 / Go1 / JCM 11833 / OCM 88) (Methanosarcina frisia), this protein is Small ribosomal subunit protein eS27.